The sequence spans 413 residues: Dolichyl-diphosphooligosaccharide--protein glycosyltransferase 48 kDa subunit (413 aa).

The Lumenal portion of the chain corresponds to 1 to 383 (GPRSLVLLEN…QYERFIPSAY (383 aa)). A helical transmembrane segment spans residues 384-404 (PYYAGAFSMMVGLFMFSIVFL). The Cytoplasmic segment spans residues 405 to 413 (HMKEKEKSD).

Belongs to the DDOST 48 kDa subunit family. Component of the oligosaccharyltransferase (OST) complex.

It is found in the endoplasmic reticulum. Its subcellular location is the endoplasmic reticulum membrane. It functions in the pathway protein modification; protein glycosylation. In terms of biological role, subunit of the oligosaccharyl transferase (OST) complex that catalyzes the initial transfer of a defined glycan (Glc(3)Man(9)GlcNAc(2) in eukaryotes) from the lipid carrier dolichol-pyrophosphate to an asparagine residue within an Asn-X-Ser/Thr consensus motif in nascent polypeptide chains, the first step in protein N-glycosylation. N-glycosylation occurs cotranslationally and the complex associates with the Sec61 complex at the channel-forming translocon complex that mediates protein translocation across the endoplasmic reticulum (ER). All subunits are required for a maximal enzyme activity. Required for the assembly of both SST3A- and SS3B-containing OST complexes. The protein is Dolichyl-diphosphooligosaccharide--protein glycosyltransferase 48 kDa subunit of Gallus gallus (Chicken).